Reading from the N-terminus, the 310-residue chain is Malate dehydrogenase (310 aa).

NAD(+) contacts are provided by residues 7–12 (GAGHVG) and Asp-32. Substrate-binding residues include Arg-81 and Arg-87. NAD(+) is bound by residues Asn-94 and 117–119 (VSN). Asn-119 and Arg-150 together coordinate substrate. His-174 serves as the catalytic Proton acceptor.

It belongs to the LDH/MDH superfamily. MDH type 3 family.

The enzyme catalyses (S)-malate + NAD(+) = oxaloacetate + NADH + H(+). Functionally, catalyzes the reversible oxidation of malate to oxaloacetate. This Chlorobium phaeobacteroides (strain BS1) protein is Malate dehydrogenase.